We begin with the raw amino-acid sequence, 684 residues long: MSEGEVQVIELINNFFLKSALLLEQSKVAHNFDTEEALRDGNHLFNIETRGDPLLEAQIQPWITFDGVKTMPPLVIETYLDLRALQPNHMVYLHDADGNPWMVCKGGKKTEIVLERWLVELDKQTIDDSIDSNDPENLHKQLVLLFRYLYTLTQLLPANDIITKPHNSQQPALINVQTRLLDGSKPILSKGRVGLSKPIIASYSNTMNETNIASHLEQRKITPIKTTFGSLRITVSYRKDVDFYVIDSDDLQKRYMTPSLSNETTTVPDRRASSNCSRSMSVSPKTNTINATLFPLEGSSARRQSISSKLQPFKVGSVGSGSFVQSGSAQSTTSLVPSLSRNVSSSSVVAALKVQRGSAGSTIVNGDVPPELSSVGSGSKYSSSFGRIRRHSSIRRSESFDRTAKPRKSTENPPEDLLEFVKLLEDKKELNMKPNTILPQQDISNSLMRFQSMKSNNDALSDNLSMSMSIDQPNVRFGSNSHSPIPSFSPNYGSIPSRLSQGSRNNSNAELITSRKSSLDRHKHNLLSRTGSNVDINRRGSVGTMETTNEDSKEDEQSHMKGMHFSNEATINKDDDEDEMLMKRSFNAGTSTTEQVMGSPRSIRSISVSSYPRNQLPLKHLNLSHPTTSATTTHAKFHKSEMSPDPLHTEGAQPHTSSQHHNSSQKNDEDDDLLFVMSDMNLTN.

Disordered regions lie at residues 260–284, 394–414, 491–520, 532–559, and 623–684; these read LSNE…SVSP, IRRS…ENPP, NYGS…SSLD, SNVD…EQSH, and LSHP…NLTN. Over residues 395 to 410 the composition is skewed to basic and acidic residues; sequence RRSESFDRTAKPRKST. The segment covering 491-516 has biased composition (polar residues); the sequence is NYGSIPSRLSQGSRNNSNAELITSRK. Positions 624–634 are enriched in low complexity; that stretch reads SHPTTSATTTH. Residues 654 to 665 are compositionally biased toward polar residues; the sequence is PHTSSQHHNSSQ.

It belongs to the ATG13 family. Fungi subfamily. As to quaternary structure, interacts with ATG1 to form the ATG1-ATG13 kinase complex.

Its subcellular location is the cytoplasm. The protein resides in the preautophagosomal structure. In terms of biological role, activates the ATG1 kinase in a nutritional condition dependent manner through the TOR pathway, leading to autophagy. Also involved in cytoplasm to vacuole transport (Cvt) and more specifically in Cvt vesicle formation. Seems to play a role in the switching machinery regulating the conversion between the Cvt pathway and autophagy. Finally, ATG13 is also required for glycogen storage during stationary phase. This is Autophagy-related protein 13 (ATG13) from Kluyveromyces lactis (strain ATCC 8585 / CBS 2359 / DSM 70799 / NBRC 1267 / NRRL Y-1140 / WM37) (Yeast).